We begin with the raw amino-acid sequence, 235 residues long: Exotoxin type C (235 aa).

An N-terminal signal peptide occupies residues 1 to 27 (MKKINIIKIVFIITVILISTISPIIKS). Residues histidine 194, histidine 228, and aspartate 230 each contribute to the Zn(2+) site.

The protein belongs to the staphylococcal/streptococcal toxin family.

Superantigen that acts as a causative agent of the symptoms associated with scarlet fever. Has been associated with streptococcal toxic shock-like disease and may play a role in the early events of rheumatic fever. Superantigens cross-link major histocompatibility complex (MHC) class II and T-cell receptor (TCR) molecules, resulting in an overstimulation of T-cells associated with a massive release of pyrogenic and inflammatory cytokines. The chain is Exotoxin type C (speC) from Streptococcus pyogenes serotype M1.